The following is a 203-amino-acid chain: uncharacterized protein (203 aa).

Disordered regions lie at residues 65–84 (LSLSEDEDEDESELEDSFDS) and 92–170 (SSSS…ETAL). Acidic residues-rich tracts occupy residues 68–82 (SEDEDEDESELEDSF) and 98–110 (SEEESEEEEEESL). Residues 111 to 122 (DSSFLVSASLSL) show a composition bias toward low complexity. The segment covering 123–168 (SEDDEEEDSESEDEDEDEDSDSDSDSDSDSDEDEDEDEDSEEEEET) has biased composition (acidic residues). A helical membrane pass occupies residues 182–202 (TSFLLPFTLVVLAILFYPAWV).

It localises to the membrane. This is an uncharacterized protein from Saccharomyces cerevisiae (strain ATCC 204508 / S288c) (Baker's yeast).